Here is a 353-residue protein sequence, read N- to C-terminus: Outer membrane protein P5 (353 aa).

An N-terminal signal peptide occupies residues 1–21 (MKKTAIALVVAGLAAASVAQA). The next 8 beta stranded transmembrane spans lie at 27–37 (TFYAGVKAGQA), 58–69 (SFTYGVFGGYQI), 77–85 (LAVELGYDD), 104–115 (HGAHLSLKGSYE), 120–128 (LDVYGKAGV), 158–167 (GLFAVGAEYA), 172–179 (LAVRLEYQ), and 205–213 (SINAGISYR). Residues 227-353 (VVSKTFSLNS…RVEIAVNGTK (127 aa)) form the OmpA-like domain. A disulfide bridge links Cys-326 with Cys-338.

This sequence belongs to the outer membrane OOP (TC 1.B.6) superfamily. OmpA family. Monomer and homodimer.

The protein resides in the cell outer membrane. With TolR probably plays a role in maintaining the position of the peptidoglycan cell wall in the periplasm. Acts as a porin with low permeability that allows slow penetration of small solutes; an internal gate slows down solute passage. This chain is Outer membrane protein P5, found in Haemophilus influenzae.